Reading from the N-terminus, the 296-residue chain is Nitrogenase iron protein (296 aa).

10–17 is an ATP binding site; it reads GKGGIGKS. C98 is a [4Fe-4S] cluster binding site. R101 carries the post-translational modification ADP-ribosylarginine; by dinitrogenase reductase ADP-ribosyltransferase. A [4Fe-4S] cluster-binding site is contributed by C133.

This sequence belongs to the NifH/BchL/ChlL family. As to quaternary structure, homodimer. Requires [4Fe-4S] cluster as cofactor. In terms of processing, the reversible ADP-ribosylation of Arg-101 inactivates the nitrogenase reductase and regulates nitrogenase activity.

It carries out the reaction N2 + 8 reduced [2Fe-2S]-[ferredoxin] + 16 ATP + 16 H2O = H2 + 8 oxidized [2Fe-2S]-[ferredoxin] + 2 NH4(+) + 16 ADP + 16 phosphate + 6 H(+). Its function is as follows. The key enzymatic reactions in nitrogen fixation are catalyzed by the nitrogenase complex, which has 2 components: the iron protein and the molybdenum-iron protein. The polypeptide is Nitrogenase iron protein (nifH) (Alcaligenes faecalis).